A 382-amino-acid chain; its full sequence is Sphingoid long-chain base transporter RSB1 (382 aa).

At 1–34 (MSNATNNTLGSLLPQLEAAANSNSLYGGMVPNLR) the chain is on the extracellular side. 2 N-linked (GlcNAc...) asparagine glycosylation sites follow: N3 and N6. Residues 35-55 (FNITMIVIWGILLTIHVVQLL) traverse the membrane as a helical segment. Residues 56–57 (MR) lie on the Cytoplasmic side of the membrane. Residues 58–78 (QYWFSIAFICTGILEVLGFIG) traverse the membrane as a helical segment. Residues 79-90 (RTWSHSNVADMD) lie on the Extracellular side of the membrane. Residues 91 to 111 (AFLLNMICLTIAPVFTMGGIY) form a helical membrane-spanning segment. Residues 112 to 135 (YQLAKLIEVYGHRFSLLPSPMAYS) are Cytoplasmic-facing. The chain crosses the membrane as a helical span at residues 136 to 156 (FIFICSDIVSLVVQAVGGGLC). The Extracellular portion of the chain corresponds to 157–171 (GVAVTDGTSTTTGNH). A helical transmembrane segment spans residues 172–192 (VFIAGLAIQVASMAIFLMLWF). Residues 193–241 (HFLFRIYISVRWEHINSRPISLSLLKISQTEVDYLYREKFHFLRLEPKR) lie on the Cytoplasmic side of the membrane. A helical membrane pass occupies residues 242-262 (WVFHYFNLAITVAVLTIFTRC). The Extracellular segment spans residues 263 to 281 (CYRLAELVVGWDGYLITHE). The chain crosses the membrane as a helical span at residues 282-302 (WYFIILDALMMAIATVTLTIF). The Cytoplasmic portion of the chain corresponds to 303–382 (HPGFAFKGRS…LFSSKKKAKL (80 aa)).

The protein belongs to the lipid-translocating exporter (LTE) (TC 9.A.26.1) family.

The protein resides in the cell membrane. Functionally, catalyzes the ATP-dependent translocation of sphingoid long-chain bases (LCBs) from the cytoplasmic site toward the extracytoplasmic side of the membrane (flip-flop). Involved in the establishment of the functional lipid asymmetry of the plasma membrane. Regulates intracellular levels of LCBs, sphingolipid precursors that are growth inhibitory at increased levels. The polypeptide is Sphingoid long-chain base transporter RSB1 (RSB1) (Saccharomyces cerevisiae (strain ATCC 204508 / S288c) (Baker's yeast)).